A 166-amino-acid chain; its full sequence is Large ribosomal subunit protein uL11 (166 aa).

Belongs to the universal ribosomal protein uL11 family.

This Dictyostelium discoideum (Social amoeba) protein is Large ribosomal subunit protein uL11 (rpl12).